Here is an 802-residue protein sequence, read N- to C-terminus: Chromosome alignment-maintaining phosphoprotein 1 (802 aa).

At M1 the chain carries N-acetylmethionine. Basic and acidic residues predominate over residues 88-105 (SDKWSEQPKEQPSKDTES). The tract at residues 88 to 475 (SDKWSEQPKE…PDLWKSSFIM (388 aa)) is disordered. A Phosphoserine modification is found at S108. The span at 135–148 (QKTSPSLCPESQAS) shows a compositional bias: polar residues. Over residues 185–203 (ERVDPPCELPELEKPERGP) the composition is skewed to basic and acidic residues. Phosphoserine is present on residues S204, S207, S234, S237, S243, S252, S254, S265, S272, S276, S298, S309, S334, S345, and S365. The interval 261-479 (ARTASPEPRK…KSSFIMESQK (219 aa)) is mediates interaction with MAD2L2. Residues 332 to 351 (PMSPGPWKPIPSVSPGPWKP) are compositionally biased toward pro residues. Over residues 354-368 (SMSTASWKSSVSSGS) the composition is skewed to low complexity. The span at 369–378 (WKTPPTSPES) shows a compositional bias: polar residues. Residue T371 is modified to Phosphothreonine. Phosphoserine occurs at positions 375, 394, 405, 416, 421, 425, 432, 434, and 441. The tract at residues 440-580 (VSPDQRKTSP…EIQLEAVDNA (141 aa)) is mediates localization to the spindle and the kinetochore and is required for the attachment of spindle microtubules to the kinetochore. T447 carries the post-translational modification Phosphothreonine. A phosphoserine mark is found at S448, S451, and S461. The residue at position 479 (K479) is an N6-acetyllysine; alternate. K479 participates in a covalent cross-link: Glycyl lysine isopeptide (Lys-Gly) (interchain with G-Cter in SUMO2); alternate. 3 positions are modified to phosphoserine: S497, S502, and S532. Residue K555 forms a Glycyl lysine isopeptide (Lys-Gly) (interchain with G-Cter in SUMO2) linkage. Positions 581–802 (KCDSLAQEGL…LESPLEEQQI (222 aa)) are mediates localization to the chromosome and the spindle and negatively regulates chromosome alignment. T593 carries the post-translational modification Phosphothreonine. K596 is covalently cross-linked (Glycyl lysine isopeptide (Lys-Gly) (interchain with G-Cter in SUMO2)). S603, S605, S617, S622, S641, S642, and S643 each carry phosphoserine. The disordered stretch occupies residues 603 to 625 (SPSSKKLKKDSQENSDAELSSSE). K660 is covalently cross-linked (Glycyl lysine isopeptide (Lys-Gly) (interchain with G-Cter in SUMO2)). Position 665 is a phosphoserine (S665). K679 is covalently cross-linked (Glycyl lysine isopeptide (Lys-Gly) (interchain with G-Cter in SUMO2)). S726 carries the post-translational modification Phosphoserine. The segment at 728 to 750 (YKCTICGKAFLLESLLKNHVAAH) adopts a C2H2-type zinc-finger fold.

As to quaternary structure, interacts with MAD2L2. Interacts with POGZ, CBX1, CBX3 and CBX5. Phosphorylated by CDK1. Mitotic phosphorylation is required for the attachment of spindle microtubules to the kinetochore.

The protein resides in the nucleus. The protein localises to the chromosome. Its subcellular location is the centromere. It localises to the kinetochore. It is found in the cytoplasm. The protein resides in the cytoskeleton. The protein localises to the spindle. Required for proper alignment of chromosomes at metaphase and their accurate segregation during mitosis. Involved in the maintenance of spindle microtubules attachment to the kinetochore during sister chromatid biorientation. May recruit CENPE and CENPF to the kinetochore. This Mus musculus (Mouse) protein is Chromosome alignment-maintaining phosphoprotein 1 (Champ1).